Reading from the N-terminus, the 138-residue chain is Large ribosomal subunit protein uL16 (138 aa).

This sequence belongs to the universal ribosomal protein uL16 family. In terms of assembly, part of the 50S ribosomal subunit.

In terms of biological role, binds 23S rRNA and is also seen to make contacts with the A and possibly P site tRNAs. The sequence is that of Large ribosomal subunit protein uL16 from Ureaplasma urealyticum serovar 10 (strain ATCC 33699 / Western).